Here is a 612-residue protein sequence, read N- to C-terminus: 1,8-cineole synthase, chloroplastic (612 aa).

The N-terminal 52 residues, 1 to 52 (MALVSGAPLASRSCLNKSLISSTHELKPLRRTILPTLRWKSATPSINMCLTT), are a transit peptide targeting the chloroplast. The Mg(2+) site is built by D363, D367, and D515. The DDXXD motif motif lies at 363–367 (DDIYD).

This sequence belongs to the terpene synthase family. Tpsd subfamily. Mg(2+) is required as a cofactor. Mn(2+) serves as cofactor.

The protein localises to the plastid. Its subcellular location is the chloroplast. The catalysed reaction is (2E)-geranyl diphosphate + H2O = 1,8-cineole + diphosphate. It participates in terpene metabolism; oleoresin biosynthesis. Terpene synthase (TPS) involved in the biosynthesis of monoterpene natural products included in conifer oleoresin secretions and volatile emissions; these compounds contribute to biotic and abiotic stress defense against herbivores and pathogens. Catalyzes the conversion of (2E)-geranyl diphosphate (GPP) to 1,8-cineole. The chain is 1,8-cineole synthase, chloroplastic from Picea engelmannii x Picea glauca (Hybrid white spruce).